The following is a 42-amino-acid chain: Cytochrome b6-f complex subunit 7 (42 aa).

The chain crosses the membrane as a helical span at residues 19–37 (AVTCIFMTLFGLSLGFALL).

This sequence belongs to the PetM family. The 4 large subunits of the cytochrome b6-f complex are cytochrome b6, subunit IV (17 kDa polypeptide, PetD), cytochrome f and the Rieske protein, while the 4 small subunits are PetG, PetL, PetM and PetN. The complex functions as a dimer.

The protein localises to the plastid. Its subcellular location is the chloroplast thylakoid membrane. Its function is as follows. Component of the cytochrome b6-f complex, which mediates electron transfer between photosystem II (PSII) and photosystem I (PSI), cyclic electron flow around PSI, and state transitions. In Thalassiosira pseudonana (Marine diatom), this protein is Cytochrome b6-f complex subunit 7.